We begin with the raw amino-acid sequence, 1170 residues long: DNA-directed RNA polymerase subunit beta (1170 aa).

It belongs to the RNA polymerase beta chain family. The RNAP catalytic core consists of 2 alpha, 1 beta, 1 beta' and 1 omega subunit. When a sigma factor is associated with the core the holoenzyme is formed, which can initiate transcription.

The catalysed reaction is RNA(n) + a ribonucleoside 5'-triphosphate = RNA(n+1) + diphosphate. In terms of biological role, DNA-dependent RNA polymerase catalyzes the transcription of DNA into RNA using the four ribonucleoside triphosphates as substrates. This is DNA-directed RNA polymerase subunit beta from Corynebacterium urealyticum (strain ATCC 43042 / DSM 7109).